The sequence spans 182 residues: MTQENQTPPPEQENLAADPAVETTAETPAVKTPEQEVAELNQKIGELQDNFLRAKAEGENIRRRAVEDIAKAHKFAIESFAEHLVPVTDSLYAALNTDAGDAKAFKEGLEITLKQLLSAFEKGRMTEINPAVGDKFDPHHHQAIASVPSEQESNTVVSVLQRGYTVADRVLRPALVTVSAPK.

The disordered stretch occupies residues 1-35; it reads MTQENQTPPPEQENLAADPAVETTAETPAVKTPEQ.

It belongs to the GrpE family. As to quaternary structure, homodimer.

The protein resides in the cytoplasm. Its function is as follows. Participates actively in the response to hyperosmotic and heat shock by preventing the aggregation of stress-denatured proteins, in association with DnaK and GrpE. It is the nucleotide exchange factor for DnaK and may function as a thermosensor. Unfolded proteins bind initially to DnaJ; upon interaction with the DnaJ-bound protein, DnaK hydrolyzes its bound ATP, resulting in the formation of a stable complex. GrpE releases ADP from DnaK; ATP binding to DnaK triggers the release of the substrate protein, thus completing the reaction cycle. Several rounds of ATP-dependent interactions between DnaJ, DnaK and GrpE are required for fully efficient folding. This Polynucleobacter necessarius subsp. necessarius (strain STIR1) protein is Protein GrpE.